The following is a 430-amino-acid chain: DNA-binding protein cre-1 (430 aa).

Residues 1-19 (MQRVQSAVDFSNLLNPSES) are compositionally biased toward polar residues. Disordered stretches follow at residues 1–77 (MQRV…LPRP), 97–187 (IRTH…PHSY), 265–340 (SRSH…RNLS), and 357–430 (LDGQ…MDRL). Residues 30 to 46 (PRQQTAQPQQQQQQPQP) are compositionally biased toward low complexity. 2 C2H2-type zinc fingers span residues 78–100 (YKCPLCDKAFHRLEHQTRHIRTH) and 106–130 (HACQFPGCSKKFSRSDELTRHSRIH). Basic and acidic residues predominate over residues 97-106 (IRTHTGEKPH). 2 stretches are compositionally biased toward polar residues: residues 130–147 (HSNPNSRRGNKGQQQQQH) and 175–187 (AMSSPNVSPPHSY). The span at 268–277 (HSHEDHDDHY) shows a compositional bias: basic and acidic residues. Positions 289-303 (PNSPNSTAPSSPTFS) are enriched in low complexity. The span at 412–422 (SVRNSSSTSLS) shows a compositional bias: polar residues.

The protein belongs to the creA/MIG C2H2-type zinc-finger protein family.

The protein localises to the nucleus. Its function is as follows. Involved in carbon catabolite repression. Represses the transcription of a number of genes by binding to a GC-rich region in their promoter. The protein is DNA-binding protein cre-1 (cre-1) of Neurospora crassa (strain ATCC 24698 / 74-OR23-1A / CBS 708.71 / DSM 1257 / FGSC 987).